A 110-amino-acid polypeptide reads, in one-letter code: UPF0122 protein gbs1018 (110 aa).

Belongs to the UPF0122 family.

Functionally, might take part in the signal recognition particle (SRP) pathway. This is inferred from the conservation of its genetic proximity to ftsY/ffh. May be a regulatory protein. The protein is UPF0122 protein gbs1018 of Streptococcus agalactiae serotype III (strain NEM316).